Reading from the N-terminus, the 313-residue chain is uncharacterized protein (313 aa).

Disordered stretches follow at residues 24–53 and 190–291; these read EEGE…PTPN and TALS…PCAR. Polar residues predominate over residues 211 to 229; that stretch reads TQNYVLKLQLSSPNSQPMS. A compositionally biased stretch (low complexity) spans 239-260; it reads SCSSSNCSSSSSSSACSSVSIS. A compositionally biased stretch (polar residues) spans 261–284; the sequence is DPNNITAYETNNVNPQFPSNQPLD.

This is an uncharacterized protein from Saccharomyces cerevisiae (strain ATCC 204508 / S288c) (Baker's yeast).